Here is a 230-residue protein sequence, read N- to C-terminus: 6-carboxyhexanoate--CoA ligase (230 aa).

It belongs to the BioW family. In terms of assembly, homodimer. The cofactor is Mg(2+).

The catalysed reaction is heptanedioate + ATP + CoA = 6-carboxyhexanoyl-CoA + AMP + diphosphate. It functions in the pathway metabolic intermediate metabolism; pimeloyl-CoA biosynthesis; pimeloyl-CoA from pimelate: step 1/1. Its function is as follows. Catalyzes the transformation of pimelate into pimeloyl-CoA with concomitant hydrolysis of ATP to AMP. This Staphylococcus aureus (strain MRSA252) protein is 6-carboxyhexanoate--CoA ligase.